The primary structure comprises 618 residues: Sphingomyelin phosphodiesterase 2 (618 aa).

The first 22 residues, 1-22 (MQQPLIILGIGIVLALVSNVES), serve as a signal peptide directing secretion. Residues 68 to 151 (RKMSCLFCTF…AFIANCGHSD (84 aa)) form the Saposin B-type domain. Intrachain disulfides connect Cys-72–Cys-147, Cys-75–Cys-140, and Cys-103–Cys-114. N-linked (GlcNAc...) asparagine glycosylation occurs at Asn-89. Asn-159 carries N-linked (GlcNAc...) asparagine glycosylation. Zn(2+) contacts are provided by Asp-189 and His-191. Cystine bridges form between Cys-204–Cys-216 and Cys-217–Cys-249. Residue Asp-278 coordinates Zn(2+). Asn-298 carries an N-linked (GlcNAc...) asparagine glycan. Zn(2+) contacts are provided by Asn-318, His-427, His-461, and His-463. Residues Cys-387 and Cys-435 are joined by a disulfide bond. 2 N-linked (GlcNAc...) asparagine glycosylation sites follow: Asn-525 and Asn-568. 2 disulfide bridges follow: Cys-588-Cys-594 and Cys-600-Cys-613.

This sequence belongs to the acid sphingomyelinase family. Requires Zn(2+) as cofactor.

It localises to the secreted. The catalysed reaction is a sphingomyelin + H2O = phosphocholine + an N-acylsphing-4-enine + H(+). It catalyses the reaction an N-acyl-15-methylhexadecasphing-4-enine-1-phosphocholine + H2O = an N-acyl-15-methylhexadecasphing-4-enine + phosphocholine + H(+). Its pathway is lipid metabolism; sphingolipid metabolism. Sphingomyelin phosphodiesterase (sphingomyelinase) that converts sphingomyelin (N-acyl-sphingoid-1-phosphocholine) to ceramide (N-acyl-sphingoid base) and phosphocholine at acidic pH. Displays its enzymatic activity when secreted. May play distinct roles in signaling. This is Sphingomyelin phosphodiesterase 2 (asm-2) from Caenorhabditis elegans.